Consider the following 296-residue polypeptide: Farnesyl diphosphate synthase (296 aa).

Residues Lys46, Arg49, and His78 each contribute to the isopentenyl diphosphate site. Asp85 and Asp91 together coordinate Mg(2+). (2E)-geranyl diphosphate is bound at residue Arg96. Arg97 is an isopentenyl diphosphate binding site. Residues Lys182, Thr183, Gln220, and Lys237 each contribute to the (2E)-geranyl diphosphate site.

Belongs to the FPP/GGPP synthase family. Requires Mg(2+) as cofactor.

The protein resides in the cytoplasm. It catalyses the reaction isopentenyl diphosphate + (2E)-geranyl diphosphate = (2E,6E)-farnesyl diphosphate + diphosphate. The chain is Farnesyl diphosphate synthase (ispA) from Bacillus subtilis (strain 168).